The following is a 306-amino-acid chain: Ornithine carbamoyltransferase (306 aa).

Carbamoyl phosphate is bound by residues 46–49 (STRT), Q73, R97, and 124–127 (HPTQ). Residues N156, D220, and 224-225 (SM) contribute to the L-ornithine site. Residues 260 to 261 (CL) and R288 each bind carbamoyl phosphate.

The protein belongs to the aspartate/ornithine carbamoyltransferase superfamily. OTCase family.

It localises to the cytoplasm. It carries out the reaction carbamoyl phosphate + L-ornithine = L-citrulline + phosphate + H(+). Its pathway is amino-acid biosynthesis; L-arginine biosynthesis; L-arginine from L-ornithine and carbamoyl phosphate: step 1/3. Functionally, reversibly catalyzes the transfer of the carbamoyl group from carbamoyl phosphate (CP) to the N(epsilon) atom of ornithine (ORN) to produce L-citrulline. The chain is Ornithine carbamoyltransferase from Campylobacter jejuni (strain RM1221).